Consider the following 137-residue polypeptide: Crustacean hyperglycemic hormones (137 aa).

The N-terminal stretch at 1-28 (MVSFRTMWSLVVVVVVVAASLGSSGVHG) is a signal peptide. A Pyrrolidone carboxylic acid modification is found at Gln64. Phe66 bears the D-phenylalanine; in form CHH-II mark. 3 disulfide bridges follow: Cys70-Cys106, Cys86-Cys102, and Cys89-Cys115. Valine amide is present on Val135.

The protein belongs to the arthropod CHH/MIH/GIH/VIH hormone family. Produced by the medulla terminalis X-organ in the eyestalks and transported to the sinus gland where they are stored and released.

It is found in the secreted. Its function is as follows. Hormone found in the sinus gland of isopods and decapods which controls the blood sugar level. Has a secretagogue action over the amylase released from the midgut gland. May act as a stress hormone and may be involved in the control of molting and reproduction. This chain is Crustacean hyperglycemic hormones, found in Procambarus clarkii (Red swamp crayfish).